The primary structure comprises 240 residues: 2-C-methyl-D-erythritol 2,4-cyclodiphosphate synthase, apicoplast (240 aa).

Residues aspartate 71 and histidine 73 each coordinate a divalent metal cation. 4-CDP-2-C-methyl-D-erythritol 2-phosphate contacts are provided by residues 71–73 and 115–116; these read DIH and HS. Histidine 123 contributes to the a divalent metal cation binding site. 4-CDP-2-C-methyl-D-erythritol 2-phosphate is bound by residues 137–139, 142–146, 181–187, and 212–214; these read DIG, FPDKD, AQVPKIS, and GKT.

This sequence belongs to the IspF family. In terms of assembly, homotrimer. It depends on a divalent metal cation as a cofactor.

It is found in the plastid. The protein localises to the apicoplast. The catalysed reaction is 4-CDP-2-C-methyl-D-erythritol 2-phosphate = 2-C-methyl-D-erythritol 2,4-cyclic diphosphate + CMP. The protein operates within isoprenoid biosynthesis; isopentenyl diphosphate biosynthesis via DXP pathway; isopentenyl diphosphate from 1-deoxy-D-xylulose 5-phosphate: step 4/6. Functionally, in the mevalonate-independent isoprenoid biosynthetic pathway, converts 4-diphosphocytidyl-2C-methyl-D-erythritol 2-phosphate into 2C-methyl-D-erythritol 2,4-cyclodiphosphate and CMP. In Plasmodium falciparum (isolate 3D7), this protein is 2-C-methyl-D-erythritol 2,4-cyclodiphosphate synthase, apicoplast.